Reading from the N-terminus, the 452-residue chain is MGRRYFGTDGIRGKVGDAPITPDFVLRLGYAAGKVLASAPGRAASGARPTVLIGKDTRVSGYMLEAALEAGFSAAGVDVMLAGPMPTPGVAYLTRALRLSAGVVISASHNPYHDNGIKFFSADGNKLPDEIEAKIEAWLDKPLDCAASDGLGKARRLDDAAGRYIEFCKSTFPAAFDLRGMKLVVDCAHGAAYQVAPHVFHELGADVIPIGVAPNGFNINDGVGATAPDALMRAVRANHADLGIALDGDADRLLVVDHTGRLYNGDELLYVLVKDRIATNGQVEGAVGTLMTNFAVEVALKEAGVQFVRAAVGDRYVLEQLRERGWQLGAEGSGHILSLDRHSTGDGIVSALLVLAALKRSGKTLAQMLEGVTLFPQKLINVRMKPGADWKGSEAIRRAIDSAEQALSGSGRVLIRASGTEPVLRVMVEARQATDANRHAEAIADAVKQATA.

S108 (phosphoserine intermediate) is an active-site residue. 4 residues coordinate Mg(2+): S108, D247, D249, and D251. Phosphoserine is present on S108.

The protein belongs to the phosphohexose mutase family. It depends on Mg(2+) as a cofactor. Post-translationally, activated by phosphorylation.

The enzyme catalyses alpha-D-glucosamine 1-phosphate = D-glucosamine 6-phosphate. Its function is as follows. Catalyzes the conversion of glucosamine-6-phosphate to glucosamine-1-phosphate. The polypeptide is Phosphoglucosamine mutase (Burkholderia pseudomallei (strain 668)).